Consider the following 334-residue polypeptide: Phosphatidylglycerol--prolipoprotein diacylglyceryl transferase (334 aa).

Transmembrane regions (helical) follow at residues 22–42 (FLPF…VVAA), 54–74 (AEPG…IIGA), 105–125 (IWEG…GVGI), and 131–151 (GLRF…AQAI). R153 provides a ligand contact to a 1,2-diacyl-sn-glycero-3-phospho-(1'-sn-glycerol). Helical transmembrane passes span 191-211 (LFQP…FVIL) and 251-271 (FLGI…GAII). Positions 296-334 (PQAEVESGETDPEEILHADDDEERTGTHKPQATSLSGSN) are disordered. Over residues 301-318 (ESGETDPEEILHADDDEE) the composition is skewed to acidic residues. Residues 323 to 334 (HKPQATSLSGSN) show a composition bias toward polar residues.

The protein belongs to the Lgt family.

The protein localises to the cell membrane. The enzyme catalyses L-cysteinyl-[prolipoprotein] + a 1,2-diacyl-sn-glycero-3-phospho-(1'-sn-glycerol) = an S-1,2-diacyl-sn-glyceryl-L-cysteinyl-[prolipoprotein] + sn-glycerol 1-phosphate + H(+). The protein operates within protein modification; lipoprotein biosynthesis (diacylglyceryl transfer). Catalyzes the transfer of the diacylglyceryl group from phosphatidylglycerol to the sulfhydryl group of the N-terminal cysteine of a prolipoprotein, the first step in the formation of mature lipoproteins. This chain is Phosphatidylglycerol--prolipoprotein diacylglyceryl transferase, found in Leifsonia xyli subsp. xyli (strain CTCB07).